A 141-amino-acid polypeptide reads, in one-letter code: Hemoglobin subunit alpha-1 (141 aa).

The Globin domain maps to valine 1–arginine 141. Histidine 58 is an O2 binding site. Histidine 87 contacts heme b.

This sequence belongs to the globin family. Heterotetramer of two alpha chains and two beta chains. In terms of tissue distribution, red blood cells.

Its function is as follows. Involved in oxygen transport from the lung to the various peripheral tissues. The chain is Hemoglobin subunit alpha-1 from Iguana iguana (Common iguana).